The chain runs to 250 residues: Coproheme decarboxylase (250 aa).

Residues R131, 145-149 (YPMNK), H172, and Q185 each bind Fe-coproporphyrin III. Residue Y145 is part of the active site.

This sequence belongs to the ChdC family. Type 1 subfamily. Fe-coproporphyrin III is required as a cofactor.

The catalysed reaction is Fe-coproporphyrin III + 2 H2O2 + 2 H(+) = heme b + 2 CO2 + 4 H2O. The enzyme catalyses Fe-coproporphyrin III + H2O2 + H(+) = harderoheme III + CO2 + 2 H2O. It carries out the reaction harderoheme III + H2O2 + H(+) = heme b + CO2 + 2 H2O. Its pathway is porphyrin-containing compound metabolism; protoheme biosynthesis. In terms of biological role, involved in coproporphyrin-dependent heme b biosynthesis. Catalyzes the decarboxylation of Fe-coproporphyrin III (coproheme) to heme b (protoheme IX), the last step of the pathway. The reaction occurs in a stepwise manner with a three-propionate intermediate. The protein is Coproheme decarboxylase of Staphylococcus aureus (strain MRSA252).